Here is a 72-residue protein sequence, read N- to C-terminus: Toxin Acra II-2 (72 aa).

The 65-residue stretch at 3-67 (VPGNYPLNTN…VWNAAKNYCK (65 aa)) folds into the LCN-type CS-alpha/beta domain. Cystine bridges form between C18–C41, C27–C46, and C31–C48.

Belongs to the long (3 C-C) scorpion toxin superfamily. Sodium channel inhibitor family. Beta subfamily. In terms of tissue distribution, expressed by the venom gland.

The protein localises to the secreted. Its function is as follows. Binds to sodium channels (Nav) and affects the channel activation process. The protein is Toxin Acra II-2 of Androctonus crassicauda (Arabian fat-tailed scorpion).